The following is a 293-amino-acid chain: ELMO domain-containing protein 2 (293 aa).

The 157-residue stretch at 126 to 282 (QHEKMLLKLW…KFHERIKGLL (157 aa)) folds into the ELMO domain.

Acts as a GTPase-activating protein (GAP) toward guanine nucleotide exchange factors like ARL2, ARL3, ARF1 and ARF6, but not for GTPases outside the Arf family. This Mus musculus (Mouse) protein is ELMO domain-containing protein 2 (Elmod2).